Here is a 315-residue protein sequence, read N- to C-terminus: Cobalamin biosynthesis protein CobD (315 aa).

Transmembrane regions (helical) follow at residues 1-21 (MLDI…YWFP), 50-70 (VFGG…PFII), 79-99 (VIYH…KSLH), 151-171 (DGII…AMMY), 209-229 (VTGI…FYSI), 250-270 (AAAA…GEVV), and 291-311 (IILM…IICF).

This sequence belongs to the CobD/CbiB family.

It is found in the cell membrane. It participates in cofactor biosynthesis; adenosylcobalamin biosynthesis. Functionally, converts cobyric acid to cobinamide by the addition of aminopropanol on the F carboxylic group. The chain is Cobalamin biosynthesis protein CobD from Clostridium acetobutylicum (strain ATCC 824 / DSM 792 / JCM 1419 / IAM 19013 / LMG 5710 / NBRC 13948 / NRRL B-527 / VKM B-1787 / 2291 / W).